The primary structure comprises 330 residues: Tetraacyldisaccharide 4'-kinase (330 aa).

58 to 65 is a binding site for ATP; that stretch reads TVGGSGKT.

This sequence belongs to the LpxK family.

It catalyses the reaction a lipid A disaccharide + ATP = a lipid IVA + ADP + H(+). It participates in glycolipid biosynthesis; lipid IV(A) biosynthesis; lipid IV(A) from (3R)-3-hydroxytetradecanoyl-[acyl-carrier-protein] and UDP-N-acetyl-alpha-D-glucosamine: step 6/6. In terms of biological role, transfers the gamma-phosphate of ATP to the 4'-position of a tetraacyldisaccharide 1-phosphate intermediate (termed DS-1-P) to form tetraacyldisaccharide 1,4'-bis-phosphate (lipid IVA). This chain is Tetraacyldisaccharide 4'-kinase, found in Shewanella pealeana (strain ATCC 700345 / ANG-SQ1).